Consider the following 1285-residue polypeptide: Period circadian protein homolog 1 (1285 aa).

The disordered stretch occupies residues Met-1 to Thr-134. Residues Met-1–Pro-151 form an interaction with BTRC region. Composition is skewed to low complexity over residues Asn-48–Ser-57 and Gly-64–Glu-115. Over residues Gln-116 to Ala-132 the composition is skewed to polar residues. Thr-121 is modified (phosphothreonine; by CSNK1E). 2 positions are modified to phosphoserine; by CSNK1E: Ser-122 and Ser-126. The Nuclear export signal 1 signature appears at Leu-138–Leu-147. 2 consecutive PAS domains span residues Ile-208–Leu-275 and Tyr-348–Gln-414. The region spanning His-422 to Pro-465 is the PAC domain. The short motif at Leu-489–Leu-498 is the Nuclear export signal 2 element. 2 disordered regions span residues Ser-503–Val-544 and Thr-643–Val-694. Low complexity-rich tracts occupy residues Ser-523–Gly-533 and Ala-648–Ala-658. The required for phosphorylation by CSNK1E stretch occupies residues Glu-592–Ser-811. 4 positions are modified to phosphoserine: Ser-657, Ser-659, Ser-700, and Ser-811. 2 disordered regions span residues Gly-802 to Thr-867 and Leu-931 to Ser-1030. The Nuclear localization signal signature appears at Val-820 to Arg-836. Over residues Gly-823–Thr-840 the composition is skewed to basic residues. A compositionally biased stretch (pro residues) spans Ser-853–Thr-867. Residues Ala-943–Leu-954 are compositionally biased toward low complexity. Positions Phe-967–Leu-979 are enriched in polar residues. Ser-972 and Ser-973 each carry phosphoserine. Positions Leu-975–Leu-982 match the Nuclear export signal 3 motif. An LXXLL motif is present at residues Leu-1036–Leu-1040. The span at Arg-1045–Ser-1055 shows a compositional bias: low complexity. Disordered regions lie at residues Arg-1045–Phe-1091 and Ile-1202–Ser-1285. Positions Leu-1056–Glu-1070 are enriched in gly residues. The segment covering Gly-1071–Ser-1088 has biased composition (low complexity). The tract at residues Ser-1142–Ser-1285 is CRY binding domain. Gly residues predominate over residues Gly-1229 to Gly-1241. Over residues Gly-1269–Ser-1285 the composition is skewed to polar residues.

As to quaternary structure, homodimer. Component of the circadian core oscillator, which includes the CRY proteins, CLOCK or NPAS2, BMAL1 or BMAL2, CSNK1D and/or CSNK1E, TIMELESS, and the PER proteins. Interacts directly with TIMELESS, PER2, PER3, CRY1 and CRY2. Interacts with BMAL1 and CLOCK. Interacts with GPRASP1. Interacts (phosphorylated) with BTRC and FBXW11; the interactions trigger proteasomal degradation. Interacts with NONO, WDR5 and SFPQ. Interacts with USP2. Interacts with HNF4A. In terms of processing, phosphorylated on serine residues by CSNK1D, CSNK1E and probably also by CSNK1G2. Phosphorylation by CSNK1D or CSNK1E promotes nuclear location of PER proteins as well as ubiquitination and subsequent degradation. May be dephosphorylated by PP1. Ubiquitinated; requires phosphorylation by CSNK1E and interaction with BTRC and FBXW11. Deubiquitinated by USP2. As to expression, expressed in the brain, mainly in the suprachiasmatic nucleus (SCN). Expression also found in the harderian gland, lung, eye, intestine, liver and skeletal muscle.

It is found in the nucleus. It localises to the cytoplasm. Transcriptional repressor which forms a core component of the circadian clock. The circadian clock, an internal time-keeping system, regulates various physiological processes through the generation of approximately 24 hour circadian rhythms in gene expression, which are translated into rhythms in metabolism and behavior. It is derived from the Latin roots 'circa' (about) and 'diem' (day) and acts as an important regulator of a wide array of physiological functions including metabolism, sleep, body temperature, blood pressure, endocrine, immune, cardiovascular, and renal function. Consists of two major components: the central clock, residing in the suprachiasmatic nucleus (SCN) of the brain, and the peripheral clocks that are present in nearly every tissue and organ system. Both the central and peripheral clocks can be reset by environmental cues, also known as Zeitgebers (German for 'timegivers'). The predominant Zeitgeber for the central clock is light, which is sensed by retina and signals directly to the SCN. The central clock entrains the peripheral clocks through neuronal and hormonal signals, body temperature and feeding-related cues, aligning all clocks with the external light/dark cycle. Circadian rhythms allow an organism to achieve temporal homeostasis with its environment at the molecular level by regulating gene expression to create a peak of protein expression once every 24 hours to control when a particular physiological process is most active with respect to the solar day. Transcription and translation of core clock components (CLOCK, NPAS2, BMAL1, BMAL2, PER1, PER2, PER3, CRY1 and CRY2) plays a critical role in rhythm generation, whereas delays imposed by post-translational modifications (PTMs) are important for determining the period (tau) of the rhythms (tau refers to the period of a rhythm and is the length, in time, of one complete cycle). A diurnal rhythm is synchronized with the day/night cycle, while the ultradian and infradian rhythms have a period shorter and longer than 24 hours, respectively. Disruptions in the circadian rhythms contribute to the pathology of cardiovascular diseases, cancer, metabolic syndromes and aging. A transcription/translation feedback loop (TTFL) forms the core of the molecular circadian clock mechanism. Transcription factors, CLOCK or NPAS2 and BMAL1 or BMAL2, form the positive limb of the feedback loop, act in the form of a heterodimer and activate the transcription of core clock genes and clock-controlled genes (involved in key metabolic processes), harboring E-box elements (5'-CACGTG-3') within their promoters. The core clock genes: PER1/2/3 and CRY1/2 which are transcriptional repressors form the negative limb of the feedback loop and interact with the CLOCK|NPAS2-BMAL1|BMAL2 heterodimer inhibiting its activity and thereby negatively regulating their own expression. This heterodimer also activates nuclear receptors NR1D1/2 and RORA/B/G, which form a second feedback loop and which activate and repress BMAL1 transcription, respectively. Regulates circadian target genes expression at post-transcriptional levels, but may not be required for the repression at transcriptional level. Controls PER2 protein decay. Represses CRY2 preventing its repression on CLOCK/BMAL1 target genes such as FXYD5 and SCNN1A in kidney and PPARA in liver. Besides its involvement in the maintenance of the circadian clock, has an important function in the regulation of several processes. Participates in the repression of glucocorticoid receptor NR3C1/GR-induced transcriptional activity by reducing the association of NR3C1/GR to glucocorticoid response elements (GREs) by BMAL1:CLOCK. Plays a role in the modulation of the neuroinflammatory state via the regulation of inflammatory mediators release, such as CCL2 and IL6. In spinal astrocytes, negatively regulates the MAPK14/p38 and MAPK8/JNK MAPK cascades as well as the subsequent activation of NFkappaB. Coordinately regulates the expression of multiple genes that are involved in the regulation of renal sodium reabsorption. Can act as gene expression activator in a gene and tissue specific manner, in kidney enhances WNK1 and SLC12A3 expression in collaboration with CLOCK. Modulates hair follicle cycling. Represses the CLOCK-BMAL1 induced transcription of BHLHE40/DEC1. The chain is Period circadian protein homolog 1 (PER1) from Spalax judaei (Judean Mountains blind mole rat).